A 153-amino-acid chain; its full sequence is SsrA-binding protein (153 aa).

Residues 133 to 143 (ADLKERDDKRQ) are compositionally biased toward basic and acidic residues. The disordered stretch occupies residues 133 to 153 (ADLKERDDKRQMQQALKQQQY). A compositionally biased stretch (low complexity) spans 144-153 (MQQALKQQQY).

It belongs to the SmpB family.

It localises to the cytoplasm. Required for rescue of stalled ribosomes mediated by trans-translation. Binds to transfer-messenger RNA (tmRNA), required for stable association of tmRNA with ribosomes. tmRNA and SmpB together mimic tRNA shape, replacing the anticodon stem-loop with SmpB. tmRNA is encoded by the ssrA gene; the 2 termini fold to resemble tRNA(Ala) and it encodes a 'tag peptide', a short internal open reading frame. During trans-translation Ala-aminoacylated tmRNA acts like a tRNA, entering the A-site of stalled ribosomes, displacing the stalled mRNA. The ribosome then switches to translate the ORF on the tmRNA; the nascent peptide is terminated with the 'tag peptide' encoded by the tmRNA and targeted for degradation. The ribosome is freed to recommence translation, which seems to be the essential function of trans-translation. The protein is SsrA-binding protein of Protochlamydia amoebophila (strain UWE25).